A 175-amino-acid chain; its full sequence is Ribosome maturation factor RimM (175 aa).

Residues 95–175 (SEDEFYWREL…RIEVDWDPGF (81 aa)) enclose the PRC barrel domain.

This sequence belongs to the RimM family. Binds ribosomal protein uS19.

It localises to the cytoplasm. Functionally, an accessory protein needed during the final step in the assembly of 30S ribosomal subunit, possibly for assembly of the head region. Essential for efficient processing of 16S rRNA. May be needed both before and after RbfA during the maturation of 16S rRNA. It has affinity for free ribosomal 30S subunits but not for 70S ribosomes. In Aliivibrio salmonicida (strain LFI1238) (Vibrio salmonicida (strain LFI1238)), this protein is Ribosome maturation factor RimM.